The sequence spans 325 residues: Aldo-keto reductase family 1 member A1 (325 aa).

Thr-2 carries the post-translational modification N-acetylthreonine. Ser-4 is subject to Phosphoserine. Residues Gly-11–Gly-20, Thr-21, and Trp-22 each bind NADP(+). N-linked (Glc) (glycation) lysine glycosylation occurs at Lys-23. Ser-38 is modified (phosphoserine). Asp-45 is an NADP(+) binding site. The active-site Proton donor is Tyr-50. N-linked (Glc) (glycation) lysine glycosylation is found at Lys-68 and Lys-85. N6-acetyllysine; alternate is present on Lys-127. An N6-succinyllysine; alternate modification is found at Lys-127. The N-linked (Glc) (glycation) lysine glycan is linked to Lys-141. Residue Lys-145 is modified to N6-succinyllysine. Residue Lys-153 is glycosylated (N-linked (Glc) (glycation) lysine). Residues Ser-162, Asn-163, Ser-211, Leu-213, Ser-215, Ser-216, Lys-263, Ser-264, Ile-265, Thr-266, Arg-269, Gln-272, and Asn-273 each contribute to the NADP(+) site. Phosphoserine is present on Ser-211.

Belongs to the aldo/keto reductase family. As to quaternary structure, monomer. Widely expressed.

It localises to the cytoplasm. Its subcellular location is the cytosol. It is found in the apical cell membrane. It carries out the reaction a primary alcohol + NADP(+) = an aldehyde + NADPH + H(+). The enzyme catalyses L-gulonate + NADP(+) = aldehydo-D-glucuronate + NADPH + H(+). It catalyses the reaction L-gulono-1,4-lactone + NADP(+) = D-glucurono-3,6-lactone + NADPH + H(+). The catalysed reaction is allyl alcohol + NADP(+) = acrolein + NADPH + H(+). It carries out the reaction glycerol + NADP(+) = D-glyceraldehyde + NADPH + H(+). The enzyme catalyses glycerol + NADP(+) = L-glyceraldehyde + NADPH + H(+). It catalyses the reaction hydroxyacetone + NADP(+) = methylglyoxal + NADPH + H(+). The catalysed reaction is 3-deoxyfructose + NADP(+) = 3-deoxyglucosone + NADPH + H(+). It carries out the reaction (R)-mevalonate + NADP(+) = (R)-mevaldate + NADPH + H(+). The enzyme catalyses pyridine 3-methanol + NADP(+) = pyridine-3-carbaldehyde + NADPH + H(+). It catalyses the reaction S-nitroso-CoA + NADPH + H(+) = sulfinamide-CoA + NADP(+). The catalysed reaction is S-nitrosoglutathione + NADPH + H(+) = S-(hydroxysulfenamide)glutathione + NADP(+). In terms of biological role, catalyzes the NADPH-dependent reduction of a wide variety of carbonyl-containing compounds to their corresponding alcohols. Displays enzymatic activity towards endogenous metabolites such as aromatic and aliphatic aldehydes, ketones, monosaccharides and bile acids. Plays an important role in ascorbic acid biosynthesis by catalyzing the reduction of D-glucuronic acid and D-glucurono-gamma-lactone. Functions as a detoxifiying enzyme by reducing a range of toxic aldehydes. Reduces methylglyoxal and 3-deoxyglucosone, which are present at elevated levels under hyperglycemic conditions and are cytotoxic. Involved also in the detoxification of lipid-derived aldehydes like acrolein. Plays a role in the activation of procarcinogens, such as polycyclic aromatic hydrocarbon trans-dihydrodiols, and in the metabolism of various xenobiotics and drugs. Also acts as an inhibitor of protein S-nitrosylation by mediating degradation of S-nitroso-coenzyme A (S-nitroso-CoA), a cofactor required to S-nitrosylate proteins. S-nitroso-CoA reductase activity is involved in reprogramming intermediary metabolism in renal proximal tubules, notably by inhibiting protein S-nitrosylation of isoform 2 of PKM (PKM2). Also acts as a S-nitroso-glutathione reductase by catalyzing the NADPH-dependent reduction of S-nitrosoglutathione. Displays no reductase activity towards retinoids. The chain is Aldo-keto reductase family 1 member A1 (Akr1a1) from Rattus norvegicus (Rat).